The chain runs to 671 residues: UvrABC system protein B (671 aa).

In terms of domain architecture, Helicase ATP-binding spans 25–412; that stretch reads EGIDAGLAHQ…AGRVVEQVVR (388 aa). Residue 38–45 participates in ATP binding; that stretch reads GVTGSGKT. The Beta-hairpin motif lies at 91 to 114; the sequence is YYDYYQPEAYVPSSDTFIEKDASI. The region spanning 429 to 595 is the Helicase C-terminal domain; sequence QVDDLLSEIH…GVFKDVADIM (167 aa). The disordered stretch occupies residues 600–624; the sequence is VPGSRSKKRKGMAKAAEENARYENE. Positions 614-624 are enriched in basic and acidic residues; the sequence is AAEENARYENE. Residues 632 to 667 form the UVR domain; sequence NKRIRQLEEKMYQLARDLEFEAAAQMRDEIGKLRER.

This sequence belongs to the UvrB family. As to quaternary structure, forms a heterotetramer with UvrA during the search for lesions. Interacts with UvrC in an incision complex.

It is found in the cytoplasm. Its function is as follows. The UvrABC repair system catalyzes the recognition and processing of DNA lesions. A damage recognition complex composed of 2 UvrA and 2 UvrB subunits scans DNA for abnormalities. Upon binding of the UvrA(2)B(2) complex to a putative damaged site, the DNA wraps around one UvrB monomer. DNA wrap is dependent on ATP binding by UvrB and probably causes local melting of the DNA helix, facilitating insertion of UvrB beta-hairpin between the DNA strands. Then UvrB probes one DNA strand for the presence of a lesion. If a lesion is found the UvrA subunits dissociate and the UvrB-DNA preincision complex is formed. This complex is subsequently bound by UvrC and the second UvrB is released. If no lesion is found, the DNA wraps around the other UvrB subunit that will check the other stand for damage. The chain is UvrABC system protein B from Pseudomonas savastanoi pv. phaseolicola (strain 1448A / Race 6) (Pseudomonas syringae pv. phaseolicola (strain 1448A / Race 6)).